The primary structure comprises 72 residues: UPF0270 protein YheU (72 aa).

The protein belongs to the UPF0270 family.

In Salmonella choleraesuis (strain SC-B67), this protein is UPF0270 protein YheU.